Here is an 853-residue protein sequence, read N- to C-terminus: Wolframin (853 aa).

A disordered region spans residues 139–179 (KQLERKMRRIYNLQRKRRRRDDDRSSSSSEGEQEPECEPLE). Positions 144 to 157 (KMRRIYNLQRKRRR) are enriched in basic residues. Positions 169–179 (GEQEPECEPLE) are enriched in acidic residues. The next 10 membrane-spanning stretches (helical) occupy residues 238–258 (MIFH…NLIV), 259–279 (SIPN…ISWW), 285–305 (LPLV…CKML), 347–367 (LYFF…TDAW), 373–393 (LTII…YASS), 446–466 (FCLN…IMMA), 473–493 (GVYT…VCIA), 513–533 (IVLF…FVAI), 545–565 (WGST…LALN), and 572–592 (ITML…LPYM). Asn694 and Asn769 each carry an N-linked (GlcNAc...) asparagine glycan.

In terms of tissue distribution, detected in adult brain.

The protein resides in the membrane. The protein localises to the endoplasmic reticulum. It is found in the mitochondrion. Participates in the regulation of cellular Ca(2+) homeostasis, at least partly, by modulating the filling state of the endoplasmic reticulum Ca(2+) store. In neurons and glial cells, has a role in maintaining neuronal function and integrity during aging. The chain is Wolframin from Drosophila melanogaster (Fruit fly).